Reading from the N-terminus, the 408-residue chain is Multidrug resistance protein MdtG (408 aa).

Transmembrane regions (helical) follow at residues 16–36, 58–78, 92–112, 115–135, 146–166, 173–193, 224–244, 256–276, 290–310, 319–339, and 378–398; these read LIVA…VMPF, IVFS…GGLA, LGMG…QFLI, ALLG…ATQV, TLST…GLLA, PVFF…LFCI, LFVT…ILTL, VAFI…LSAP, ILIT…YVQT, FLLG…LVYN, and AVFL…WNSL.

Belongs to the major facilitator superfamily. DHA1 family. MdtG (TC 2.A.1.2.20) subfamily.

The protein localises to the cell inner membrane. Functionally, confers resistance to fosfomycin and deoxycholate. This chain is Multidrug resistance protein MdtG, found in Escherichia coli O7:K1 (strain IAI39 / ExPEC).